The chain runs to 45 residues: Large ribosomal subunit protein bL34 (45 aa).

The disordered stretch occupies residues 1-45; it reads MTKRTFGGTSRKRKRVSGFRVRMRSHTGRRVIRTRRKRGRSRLAA. The span at 10–45 shows a compositional bias: basic residues; sequence SRKRKRVSGFRVRMRSHTGRRVIRTRRKRGRSRLAA.

It belongs to the bacterial ribosomal protein bL34 family.

The sequence is that of Large ribosomal subunit protein bL34 from Synechococcus sp. (strain CC9311).